The chain runs to 472 residues: Squamosa promoter-binding-like protein 18 (472 aa).

Residues 89–110 (AKVPPSTSTLKRPRGGGGGGGG) are disordered. The segment at 112 to 189 (CPSCAVDGCK…DGHNRRRRKP (78 aa)) adopts an SBP-type zinc-finger fold. The Zn(2+) site is built by C115, C120, C137, H140, C156, C159, H163, and C175. Positions 172–188 (KRSCRKRLDGHNRRRRK) match the Bipartite nuclear localization signal motif. Disordered stretches follow at residues 179 to 218 (LDGH…RPEP), 233 to 261 (SHHH…TAAF), and 358 to 381 (SVDV…HHHH). Polar residues predominate over residues 192-209 (DSMSSGSFMTSQQGTRFA). Positions 252–261 (SPSSATTAAF) are enriched in low complexity.

Expressed in young panicles.

The protein localises to the nucleus. Trans-acting factor that binds specifically to the consensus nucleotide sequence 5'-TNCGTACAA-3'. May be involved in panicle development. The sequence is that of Squamosa promoter-binding-like protein 18 (SPL18) from Oryza sativa subsp. japonica (Rice).